The sequence spans 741 residues: uncharacterized protein (741 aa).

Over residues 1–17 (MDSNTNENNSHASSNER) the composition is skewed to polar residues. Residues 1–50 (MDSNTNENNSHASSNERQSSEGHDDYLNRNPNSEATEGEEGTHPTTGTQP) are disordered. Positions 18–27 (QSSEGHDDYL) are enriched in basic and acidic residues. The RING-type 1; degenerate zinc-finger motif lies at 107–150 (CPICYDDMNENDEKQATKMPCGHIFGKNCLQKWLENHCTCPLCR). Composition is skewed to polar residues over residues 177-193 (GNQG…SNGV), 252-263 (PDSNTSTPTTRS), and 277-302 (NASS…NAFF). 6 disordered regions span residues 177-214 (GNQG…RTGV), 238-387 (SATN…NTNR), 500-543 (QPAV…PGIT), 561-619 (ENRM…TPTH), 638-688 (STPS…PQCQ), and 713-741 (RCQQ…EEHK). The span at 316–332 (TSNLTSNSGSMTNSTST) shows a compositional bias: low complexity. 2 stretches are compositionally biased toward polar residues: residues 333–344 (DLPTSNLPSQNA) and 357–386 (PPNL…ANTN). 3 stretches are compositionally biased toward polar residues: residues 563–586 (RMNQ…SINV), 604–619 (ENSS…TPTH), and 652–661 (SKVSSGTSTP). The segment at 687 to 736 (CQLEDQGICDPNDRFVHFECGHSVHERCQQSTSNSENQMDEEIGECPKCR) adopts an RING-type 2; degenerate zinc-finger fold. Over residues 731–741 (ECPKCRNEEHK) the composition is skewed to basic and acidic residues.

It is found in the nucleus. This is an uncharacterized protein from Schizosaccharomyces pombe (strain 972 / ATCC 24843) (Fission yeast).